Consider the following 354-residue polypeptide: UDP-N-acetylglucosamine--N-acetylmuramyl-(pentapeptide) pyrophosphoryl-undecaprenol N-acetylglucosamine transferase (354 aa).

UDP-N-acetyl-alpha-D-glucosamine-binding residues include S196 and Q288.

It belongs to the glycosyltransferase 28 family. MurG subfamily.

The protein localises to the cell membrane. The catalysed reaction is Mur2Ac(oyl-L-Ala-gamma-D-Glu-L-Lys-D-Ala-D-Ala)-di-trans,octa-cis-undecaprenyl diphosphate + UDP-N-acetyl-alpha-D-glucosamine = beta-D-GlcNAc-(1-&gt;4)-Mur2Ac(oyl-L-Ala-gamma-D-Glu-L-Lys-D-Ala-D-Ala)-di-trans,octa-cis-undecaprenyl diphosphate + UDP + H(+). It participates in cell wall biogenesis; peptidoglycan biosynthesis. In terms of biological role, cell wall formation. Catalyzes the transfer of a GlcNAc subunit on undecaprenyl-pyrophosphoryl-MurNAc-pentapeptide (lipid intermediate I) to form undecaprenyl-pyrophosphoryl-MurNAc-(pentapeptide)GlcNAc (lipid intermediate II). The sequence is that of UDP-N-acetylglucosamine--N-acetylmuramyl-(pentapeptide) pyrophosphoryl-undecaprenol N-acetylglucosamine transferase from Streptococcus suis (strain 98HAH33).